The sequence spans 44 residues: Protein PsbN (44 aa).

A helical transmembrane segment spans residues 7–29 (VATVFVSCLVLSITGYSLYIGFG).

Belongs to the PsbN family.

The protein resides in the plastid. The protein localises to the chloroplast thylakoid membrane. In terms of biological role, may play a role in photosystem I and II biogenesis. The sequence is that of Protein PsbN from Nephroselmis olivacea (Green alga).